The primary structure comprises 258 residues: Imidazole glycerol phosphate synthase subunit HisF (258 aa).

Catalysis depends on residues Asp11 and Asp130.

Belongs to the HisA/HisF family. In terms of assembly, heterodimer of HisH and HisF.

It localises to the cytoplasm. It carries out the reaction 5-[(5-phospho-1-deoxy-D-ribulos-1-ylimino)methylamino]-1-(5-phospho-beta-D-ribosyl)imidazole-4-carboxamide + L-glutamine = D-erythro-1-(imidazol-4-yl)glycerol 3-phosphate + 5-amino-1-(5-phospho-beta-D-ribosyl)imidazole-4-carboxamide + L-glutamate + H(+). It functions in the pathway amino-acid biosynthesis; L-histidine biosynthesis; L-histidine from 5-phospho-alpha-D-ribose 1-diphosphate: step 5/9. Its function is as follows. IGPS catalyzes the conversion of PRFAR and glutamine to IGP, AICAR and glutamate. The HisF subunit catalyzes the cyclization activity that produces IGP and AICAR from PRFAR using the ammonia provided by the HisH subunit. The chain is Imidazole glycerol phosphate synthase subunit HisF from Nitrobacter winogradskyi (strain ATCC 25391 / DSM 10237 / CIP 104748 / NCIMB 11846 / Nb-255).